Here is a 459-residue protein sequence, read N- to C-terminus: MLKIYNSLTRQKEEFKPIVAGKVGMYVCGVTIYDLCHIGHGRTFVSFDVVARYLRYLGYDLTFVRNITDIDDKIIKRAAENAETCESLTERLIQEMYADFDALNIKRPDVEPRATAYIEEIIALVERLIERGFAYVADNGDVMFEVSQYSEYGKLSKQDLDQLQAGARVDIEAAKRSPLDFVLWKMSKPGEPTWESPWGSGRPGWHIECSAMNSSILGTHFDIHGGGSDLQFPHHENEIAQSCCAHDTQYVNTWMHSGMVMVDKEKMSKSLGNFFTIRDVLGHYDAETVRYFLMSGHYRSQLNYSEENLNQARASLERLYNALRGLDRSVPAAGGEEYVTRFTAAMNDDFNTPEAYSVLFDMAREINRLKSEDMTNASALGSLMRELADVIGILYQEPEAFFQGSAEDEDAAQIEALIKLRNDSRATKDWANADLARDKLNEMGIVLEDGPNGTTWRRK.

Cysteine 28 serves as a coordination point for Zn(2+). The 'HIGH' region motif lies at 30–40 (VTIYDLCHIGH). Zn(2+)-binding residues include cysteine 209, histidine 234, and glutamate 238. The 'KMSKS' region signature appears at 266–270 (KMSKS). ATP is bound at residue lysine 269.

This sequence belongs to the class-I aminoacyl-tRNA synthetase family. Monomer. It depends on Zn(2+) as a cofactor.

It is found in the cytoplasm. It catalyses the reaction tRNA(Cys) + L-cysteine + ATP = L-cysteinyl-tRNA(Cys) + AMP + diphosphate. The protein is Cysteine--tRNA ligase of Vibrio cholerae serotype O1 (strain ATCC 39541 / Classical Ogawa 395 / O395).